We begin with the raw amino-acid sequence, 335 residues long: Dihydroorotate dehydrogenase (quinone) (335 aa).

FMN is bound by residues 59-63 (AGLDK) and Thr-83. Lys-63 provides a ligand contact to substrate. Residue 108 to 112 (NRMGF) coordinates substrate. FMN contacts are provided by Asn-136 and Asn-169. A substrate-binding site is contributed by Asn-169. Catalysis depends on Ser-172, which acts as the Nucleophile. A substrate-binding site is contributed by Asn-174. Residues Lys-214 and Thr-242 each contribute to the FMN site. 243–244 (NT) serves as a coordination point for substrate. FMN is bound by residues Gly-265, Gly-294, and 315–316 (YS).

Belongs to the dihydroorotate dehydrogenase family. Type 2 subfamily. In terms of assembly, monomer. It depends on FMN as a cofactor.

The protein localises to the cell membrane. It carries out the reaction (S)-dihydroorotate + a quinone = orotate + a quinol. It functions in the pathway pyrimidine metabolism; UMP biosynthesis via de novo pathway; orotate from (S)-dihydroorotate (quinone route): step 1/1. In terms of biological role, catalyzes the conversion of dihydroorotate to orotate with quinone as electron acceptor. This chain is Dihydroorotate dehydrogenase (quinone), found in Neisseria meningitidis serogroup C / serotype 2a (strain ATCC 700532 / DSM 15464 / FAM18).